The sequence spans 370 residues: Aspartate beta-hydroxylase domain-containing protein 2 (370 aa).

Topologically, residues 1–57 (MVWALPRTSSPSCIAPSYKPDSGWIKMSAEWLIDWSCLLNGLRDLIAGCIQAVRDCN) are cytoplasmic. A helical membrane pass occupies residues 58–78 (SFALTTVICLLMLFAWYCYRV). The Lumenal portion of the chain corresponds to 79-370 (GKDQPRSPFA…ALDSIFAPGR (292 aa)). Residue Asn-212 is glycosylated (N-linked (GlcNAc...) asparagine). 2-oxoglutarate contacts are provided by Trp-229 and Ser-273. Residue His-284 participates in Fe cation binding. 293-295 (RCH) contributes to the 2-oxoglutarate binding site. Residue His-329 participates in Fe cation binding. Arg-342 lines the 2-oxoglutarate pocket.

The protein belongs to the aspartyl/asparaginyl beta-hydroxylase family. Fe cation serves as cofactor.

Its subcellular location is the membrane. Functionally, may function as 2-oxoglutarate-dependent dioxygenase. This chain is Aspartate beta-hydroxylase domain-containing protein 2 (asphd2), found in Xenopus tropicalis (Western clawed frog).